Consider the following 238-residue polypeptide: 7-cyano-7-deazaguanine synthase (238 aa).

An ATP-binding site is contributed by phenylalanine 12–leucine 22. Zn(2+) contacts are provided by cysteine 200, cysteine 215, cysteine 218, and cysteine 221.

The protein belongs to the QueC family. It depends on Zn(2+) as a cofactor.

The catalysed reaction is 7-carboxy-7-deazaguanine + NH4(+) + ATP = 7-cyano-7-deazaguanine + ADP + phosphate + H2O + H(+). The protein operates within purine metabolism; 7-cyano-7-deazaguanine biosynthesis. Its function is as follows. Catalyzes the ATP-dependent conversion of 7-carboxy-7-deazaguanine (CDG) to 7-cyano-7-deazaguanine (preQ(0)). This Lawsonia intracellularis (strain PHE/MN1-00) protein is 7-cyano-7-deazaguanine synthase.